A 171-amino-acid polypeptide reads, in one-letter code: AAF/I fimbrial subunit (171 aa).

The N-terminal stretch at 1-28 (MKTLKNMRRKNLCITLGLVSLLSRGANA) is a signal peptide.

The protein resides in the fimbrium. The chain is AAF/I fimbrial subunit (aggA) from Escherichia coli.